The chain runs to 312 residues: Olfactory receptor 4F6 (312 aa).

The Extracellular segment spans residues 1–25 (MDEANHSVVSEFVFLGLSDSRKIQL). N-linked (GlcNAc...) asparagine glycosylation is present at asparagine 5. The helical transmembrane segment at 26-49 (LLFLFFSVFYVSSLMGNLLIVLTV) threads the bilayer. Residues 50–57 (TSDPRLQS) lie on the Cytoplasmic side of the membrane. Residues 58-79 (PMYFLLANLSIINLVFCSSTAP) form a helical membrane-spanning segment. The Extracellular segment spans residues 80 to 100 (KMIYDLFRKHKTISFGGCVVQ). Cysteine 97 and cysteine 189 form a disulfide bridge. Residues 101–120 (IFFIHAVGGTEMVLLIAMAF) traverse the membrane as a helical segment. The Cytoplasmic segment spans residues 121 to 139 (DRYVAICKPLHYLTIMNPQ). Residues 140–158 (RCILFLVISWIIGIIHSVI) traverse the membrane as a helical segment. The Extracellular segment spans residues 159–195 (QLAFVVDLLFCGPNELDSFFCDLPRFIKLACIETYTL). The chain crosses the membrane as a helical span at residues 196 to 219 (GFMVTANSGFISLASFLILIISYI). Residues 220–235 (FILVTVQKKSSGGIFK) lie on the Cytoplasmic side of the membrane. The helical transmembrane segment at 236–258 (AFSMLSAHVIVVVLVFGPLIFFY) threads the bilayer. Residues 259–269 (IFPFPTSHLDK) lie on the Extracellular side of the membrane. The chain crosses the membrane as a helical span at residues 270–289 (FLAIFDAVITPVLNPVIYTF). Over 290–312 (RNKEMMVAMRRRCSQFVNYSKIF) the chain is Cytoplasmic.

This sequence belongs to the G-protein coupled receptor 1 family.

The protein resides in the cell membrane. Odorant receptor. The polypeptide is Olfactory receptor 4F6 (OR4F6) (Homo sapiens (Human)).